Reading from the N-terminus, the 299-residue chain is Bifunctional protein FolD 2 (299 aa).

NADP(+)-binding positions include 168–170 (GRS), Ser193, and Ile234.

This sequence belongs to the tetrahydrofolate dehydrogenase/cyclohydrolase family. In terms of assembly, homodimer.

The enzyme catalyses (6R)-5,10-methylene-5,6,7,8-tetrahydrofolate + NADP(+) = (6R)-5,10-methenyltetrahydrofolate + NADPH. It catalyses the reaction (6R)-5,10-methenyltetrahydrofolate + H2O = (6R)-10-formyltetrahydrofolate + H(+). The protein operates within one-carbon metabolism; tetrahydrofolate interconversion. Its function is as follows. Catalyzes the oxidation of 5,10-methylenetetrahydrofolate to 5,10-methenyltetrahydrofolate and then the hydrolysis of 5,10-methenyltetrahydrofolate to 10-formyltetrahydrofolate. The polypeptide is Bifunctional protein FolD 2 (Rhizobium etli (strain ATCC 51251 / DSM 11541 / JCM 21823 / NBRC 15573 / CFN 42)).